The chain runs to 154 residues: Peptidoglycan amidase Tse1 (154 aa).

Cys7 and Cys148 form a disulfide bridge. The active-site Nucleophile is the Cys30. His91 functions as the Proton acceptor in the catalytic mechanism.

In terms of assembly, forms a heterotetramer with Tsi1 consisting of two Tse1 dimers and two Tsi1 dimers. Formation of the complex inactivates Tse1 enzymatic activity.

It localises to the host membrane. The protein localises to the secreted. It carries out the reaction Hydrolysis of gamma-D-glutamyl bonds to the L-terminus (position 7) of meso-diaminopimelic acid (meso-A2pm) in 7-(L-Ala-gamma-D-Glu)-meso-A2pm and 7-(L-Ala-gamma-D-Glu)-7-(D-Ala)-meso-A2pm. It is required that the D-terminal amino and carboxy groups of meso-A2pm are unsubstituted.. In terms of biological role, toxin secreted by the H1 type VI (H1-T6SS) secretion system into the periplasm of recipient cells. Degrades peptidoglycan via amidase activity thereby helping itself to compete with other bacteria. To protect itself, the bacterium synthesizes immunity protein Tsi1 that specifically interacts with and inactivates cognate toxin. The polypeptide is Peptidoglycan amidase Tse1 (Pseudomonas aeruginosa (strain ATCC 15692 / DSM 22644 / CIP 104116 / JCM 14847 / LMG 12228 / 1C / PRS 101 / PAO1)).